We begin with the raw amino-acid sequence, 369 residues long: Cobalt-precorrin-5B C(1)-methyltransferase (369 aa).

It belongs to the CbiD family.

It carries out the reaction Co-precorrin-5B + S-adenosyl-L-methionine = Co-precorrin-6A + S-adenosyl-L-homocysteine. It functions in the pathway cofactor biosynthesis; adenosylcobalamin biosynthesis; cob(II)yrinate a,c-diamide from sirohydrochlorin (anaerobic route): step 6/10. Functionally, catalyzes the methylation of C-1 in cobalt-precorrin-5B to form cobalt-precorrin-6A. The polypeptide is Cobalt-precorrin-5B C(1)-methyltransferase (Geobacter metallireducens (strain ATCC 53774 / DSM 7210 / GS-15)).